The sequence spans 842 residues: MVAFTVDQIRSLMDKVTNVRNMSVIAHVDHGKSTLTDSLVQRAGIISAAKAGEARFTDTRKDEQERGITIKSTAISLFSEMSEEDVKDIKQKTEGNSFLINLIDSPGHVDFSSEVTAALRVTDGALVVVDTVEGVCVQTETVLRQALGERIKPVVVINKVDRALLELQVSKEDLYQSFSRTVESVNVIISTYADEVLGDVQVYPQKGTVAFGSGLHGWAFTIRQFANRYSKKFGVDREKMMERLWGDSYFNPKTKKWTNKDRDADGKPLERAFNMFVLDPIFRLFAAIMNFKKDEIPVLLEKLEIALKSDERDLEGKALLKVVMRKFLPAADALLEMIIMHLPSPVTAQNYRAEQLYEGPSDDPACIAIKNCDPKADLMLYVSKMVPTSDKGRFYAFGRVFSGTVKSGQKVRIQGPSFTVGKKEDLFIKAIQRAVLMMGRFVEPIDDCPAGNIVGLVGIDQFLLKTGTLTTFESAHNMKVMKFSVSPVVQVAVEVKNANDLPKLVEGLKRLSKSDPCVLTYMSESGEHIVAGTGELHLEICLQDLENDHAGIPLKISPPVVAYRETVEGESSQVALSKSPNKHNRIYLKAQPIDEEVSLAIEGGKINPRDDFKARARVMADEYGWDVTDARKIWCFGPDGNGPNLVVDQTKAVQYLNEIKDSVVSAFQWATKEGPIFGEQMRSVRINLLDVTLHADAIHRGAGQIMPTMRRATYAGFLLAEPKIQEPVFLVEIQCPEQAVGGIYSVLNRKRGQVVSEEQRPGTPLFTVKAYLPVNESFGFTGELRQATGGQAFPQMVFDHWATLGTDPLDPTTKAGEIVVEARKRHGLKENVPGWQEYYDKL.

The tr-type G domain maps to 17–253 (TNVRNMSVIA…LWGDSYFNPK (237 aa)). Residues 26–33 (AHVDHGKS), 158–161 (NKVD), and 213–215 (SGL) each bind GTP. At H699 the chain carries Diphthamide.

The protein belongs to the TRAFAC class translation factor GTPase superfamily. Classic translation factor GTPase family. EF-G/EF-2 subfamily.

The protein localises to the cytoplasm. It catalyses the reaction GTP + H2O = GDP + phosphate + H(+). Catalyzes the GTP-dependent ribosomal translocation step during translation elongation. During this step, the ribosome changes from the pre-translocational (PRE) to the post-translocational (POST) state as the newly formed A-site-bound peptidyl-tRNA and P-site-bound deacylated tRNA move to the P and E sites, respectively. Catalyzes the coordinated movement of the two tRNA molecules, the mRNA and conformational changes in the ribosome. In Eremothecium gossypii (strain ATCC 10895 / CBS 109.51 / FGSC 9923 / NRRL Y-1056) (Yeast), this protein is Elongation factor 2 (EFT1).